The primary structure comprises 268 residues: MAVFADLDLRAGSDLKALRGLVETAAHLGYSVVAINHIVDFKEKKQEIEKPVAVSELFTTLPIVQGKSRPIKILTRLTIIVSDPSHCNVLRATSSRARLYDVVAVFPKTEKLFHIACTHLDVDLVCITVTEKLPFYFKRPPINVAIDRGLAFELVYSPAIKDSTMRRYTISSALNLMQICKGKNVIISSAAERPLEIRGPYDVANLGLLFGLSESDAKAAVSTNCRAALLHGETRKTAFGIISTVKKPRPSEGDEDCLPASKKAKCEG.

An N-acetylalanine modification is found at A2. Residues 247 to 268 are disordered; that stretch reads KPRPSEGDEDCLPASKKAKCEG. The residue at position 251 (S251) is a Phosphoserine.

It belongs to the eukaryotic/archaeal RNase P protein component 3 family. As to quaternary structure, component of nuclear RNase P and RNase MRP ribonucleoproteins. RNase P consists of a catalytic RNA moiety and about 10 protein subunits; POP1, POP4, POP5, POP7, RPP14, RPP21, RPP25, RPP30, RPP38 and RPP40. Within the RNase P complex, POP1, POP7 and RPP25 form the 'finger' subcomplex, POP5, RPP14, RPP40 and homodimeric RPP30 form the 'palm' subcomplex, and RPP21, POP4 and RPP38 form the 'wrist' subcomplex. All subunits of the RNase P complex interact with the catalytic RNA. Several subunits of RNase P are also part of the RNase MRP complex. RNase MRP consists of a catalytic RNA moiety and about 8 protein subunits; POP1, POP7, RPP25, RPP30, RPP38, RPP40 and possibly also POP4 and POP5.

It is found in the nucleus. It localises to the nucleolus. Component of ribonuclease P, a ribonucleoprotein complex that generates mature tRNA molecules by cleaving their 5'-ends. Also a component of the MRP ribonuclease complex, which cleaves pre-rRNA sequences. In Homo sapiens (Human), this protein is Ribonuclease P protein subunit p30 (RPP30).